The sequence spans 480 residues: MLLKNAVQLICYPDRIGNNLKDLYTVVDTHLSEAIGGLHILPFFPSNADGGFSPLTHKEVDPKVGTWDDIEAFTAKYDLCVDLTVNHISDESPEFTDFIANGFDSEYADLFVHVDKFGEISPDDMAKIHIRKEKEPFREVTLSDGTKTRVWCTFTEQQIDLNYESDLAYQLMESYIGFLTSKGVNLLRLDAFGYTTKRIGTSCFLVEPEVYQILDWVNQVALKHGAECLPEVHDHTSYQYAISRRNMHPYGFALPPLLLYSLLDANSTYLKNWLRMCPRNMVTVLDTHDGICIPDVEGVLPDEKIKVLIDNIDARSADPIMRRSAANIHSVGAIYQLTCTFYDALMQNDDAYIAARAIQFFTPGIPQVYYVGLLAGCNDHELMEQSGELRDINRHYYTLEEVEQDIQKPVVQRLLSLMKFRSNYPAFDGHFELNYSNNSSVAMAWRHGDYYCHLFVDLNFKTVKVTYTDVETGETRHLEC.

Asp190 serves as the catalytic Nucleophile. Residue Tyr194 participates in substrate binding. Glu231 serves as the catalytic Proton donor. Residue Gln336 coordinates substrate.

Belongs to the glycosyl hydrolase 13 family. Sucrose phosphorylase subfamily.

It carries out the reaction 2-O-(alpha-D-glucopyranosyl)glycerol + phosphate = alpha-D-glucose 1-phosphate + glycerol. In terms of biological role, catalyzes the reversible phosphorolysis of 2-O-alpha-D-glucosylglycerol with retention of the anomeric configuration, forming alpha-D-glucose 1-phosphate and glycerol. Has most likely a catabolic role, either regulating the intracellular levels of glucosylglycerol, which acts as a compatible solute, or degrading it when the environmental conditions change. Cannot catalyze the phosphorolysis of sucrose or glucosylglycerate. In Marinobacter adhaerens (strain DSM 23420 / HP15), this protein is Glucosylglycerol phosphorylase.